A 1383-amino-acid chain; its full sequence is Insulin receptor (1383 aa).

The first 26 residues, 1–26 (MGSGRGCETTAVPLLMAVAVAGGTAG), serve as a signal peptide directing secretion. Extracellular-side segments run 27 to 759 (HLYP…TRPS) and 764 to 957 (SLEE…NIAK). An intrachain disulfide couples cysteine 34 to cysteine 52. N-linked (GlcNAc...) asparagine glycans are attached at residues asparagine 42, asparagine 51, asparagine 104, and asparagine 137. Cystine bridges form between cysteine 152/cysteine 181, cysteine 185/cysteine 208, cysteine 195/cysteine 214, cysteine 218/cysteine 227, cysteine 222/cysteine 233, cysteine 234/cysteine 242, cysteine 238/cysteine 251, cysteine 254/cysteine 263, and cysteine 267/cysteine 279. Residue asparagine 241 is glycosylated (N-linked (GlcNAc...) asparagine). Asparagine 281 carries N-linked (GlcNAc...) asparagine glycosylation. Cystine bridges form between cysteine 285-cysteine 310, cysteine 292-cysteine 300, cysteine 314-cysteine 327, cysteine 330-cysteine 334, and cysteine 338-cysteine 359. The N-linked (GlcNAc...) asparagine glycan is linked to asparagine 321. Residue asparagine 363 is glycosylated (N-linked (GlcNAc...) asparagine). Serine 399 is modified (phosphoserine). Position 400 is a phosphotyrosine (tyrosine 400). Serine 406 bears the Phosphoserine mark. N-linked (GlcNAc...) asparagine glycans are attached at residues asparagine 423 and asparagine 444. A disulfide bridge links cysteine 461 with cysteine 494. N-linked (GlcNAc...) asparagine glycosylation is found at asparagine 540, asparagine 634, asparagine 652, and asparagine 699. A Fibronectin type-III 1 domain is found at 625 to 727 (VPLDPISVSN…SQILKELEES (103 aa)). A disulfide bond links cysteine 675 and cysteine 900. The tract at residues 687-709 (SPPFESDDSQKHNQSEYDDSASE) is disordered. Residues 734–742 (EDYLHNVVF) form an insulin-binding region. The segment at 747–783 (TSSGNGAEDTRPSRKRRSLEEVGNVTATTPTLPDFPN) is disordered. Fibronectin type-III domains follow at residues 754–848 (EDTR…TMPE) and 854–948 (IVGP…VTDY). N-linked (GlcNAc...) asparagine glycosylation is found at asparagine 770, asparagine 783, asparagine 921, and asparagine 934. A compositionally biased stretch (polar residues) spans 771–783 (VTATTPTLPDFPN). The chain crosses the membrane as a helical span at residues 958–978 (IIIGPLIFVFLFSVVIGSIYL). Residues 979 to 1383 (FLRKRQPDGP…VLTLPRSNPS (405 aa)) are Cytoplasmic-facing. Residues 997–1000 (NPEY) form an important for interaction with IRS1, SHC1 and STAT5B region. Tyrosine 1000 bears the Phosphotyrosine; by autocatalysis mark. Residues 1024–1299 (ITLLRELGQG…LLKDDLHPSF (276 aa)) enclose the Protein kinase domain. 2 residues coordinate ATP: serine 1034 and lysine 1058. Lysine 1080 participates in a covalent cross-link: Glycyl lysine isopeptide (Lys-Gly) (interchain with G-Cter in ubiquitin). Cysteine 1084 bears the S-nitrosocysteine mark. ATP is bound at residue 1105–1111 (ELMAHGD). The active-site Proton donor/acceptor is the aspartate 1160. ATP is bound by residues 1164–1165 (RN) and aspartate 1178. Phosphotyrosine; by autocatalysis occurs at positions 1186, 1190, 1191, 1356, and 1362. Residues 1361–1383 (PYTHMNGGKKNGRVLTLPRSNPS) are disordered. A PIK3R1 binding region spans residues 1362 to 1365 (YTHM).

Belongs to the protein kinase superfamily. Tyr protein kinase family. Insulin receptor subfamily. Tetramer of 2 alpha and 2 beta chains linked by disulfide bonds. The alpha chains carry the insulin-binding regions, while the beta chains carry the kinase domain. Forms a hybrid receptor with IGF1R, the hybrid is a tetramer consisting of 1 alpha chain and 1 beta chain of INSR and 1 alpha chain and 1 beta chain of IGF1R. Interacts with SORBS1 but dissociates from it following insulin stimulation. Binds SH2B2. Activated form of INSR interacts (via Tyr-1000) with the PTB/PID domains of IRS1 and SHC1. The sequences surrounding the phosphorylated NPXY motif contribute differentially to either IRS1 or SHC1 recognition. Interacts (via tyrosines in the C-terminus) with IRS2 (via PTB domain and 591-786 AA); the 591-786 would be the primary anchor of IRS2 to INSR while the PTB domain would have a stabilizing action on the interaction with INSR. Interacts with the SH2 domains of the 85 kDa regulatory subunit of PI3K (PIK3R1) in vitro, when autophosphorylated on tyrosine residues. Interacts with SOCS7. Interacts (via the phosphorylated Tyr-1000), with SOCS3. Interacts (via the phosphorylated Tyr-1186, Tyr-1190, Tyr-1191) with SOCS1. Interacts with ARRB2. Interacts with GRB10; this interaction blocks the association between IRS1/IRS2 and INSR, significantly reduces insulin-stimulated tyrosine phosphorylation of IRS1 and IRS2 and thus decreases insulin signaling. Interacts with PDPK1. Interacts (via Tyr-1191) with GRB14 (via BPS domain); this interaction protects the tyrosines in the activation loop from dephosphorylation, but promotes dephosphorylation of Tyr-1000, this results in decreased interaction with, and phosphorylation of, IRS1. Interacts (via subunit alpha) with ENPP1 (via 485-599 AA); this interaction blocks autophosphorylation. Interacts with PTPRE; this interaction is dependent of Tyr-1186, Tyr-1190 and Tyr-1191 of the INSR. Interacts with STAT5B (via SH2 domain). Interacts with PTPRF. Interacts with GRB7. Interacts with CAV2 (tyrosine-phosphorylated form); the interaction is increased with 'Tyr-27'phosphorylation of CAV2. Interacts with ATIC; ATIC together with PRKAA2/AMPK2 and HACD3/PTPLAD1 is proposed to be part of a signaling netwok regulating INSR autophosphorylation and endocytosis. Interacts with the insulin receptor SORL1; this interaction strongly increases its surface exposure, hence strengthens insulin signal reception. Interacts (tyrosine phosphorylated) with CCDC88A/GIV (via SH2-like region); binding requires autophosphorylation of the Insr C-terminal region. Interacts with GNAI3; the interaction is probably mediated by CCDC88A/GIV. Interacts with LMBRD1. Interacts (in response to insulin stimulation) with NCK1; this interaction may recruit PTPN1 to mediate INSR dephosphorylation. Interacts with CD248; this interaction diminishes INSR autophosphorylation. In terms of processing, after being transported from the endoplasmic reticulum to the Golgi apparatus, the single glycosylated precursor is further glycosylated and then cleaved, followed by its transport to the plasma membrane. Autophosphorylated on tyrosine residues in response to insulin. Phosphorylation of Tyr-1000 is required for binding to IRS1, SHC1 and STAT5B. May also be phosphorylated at Tyr-1186 and Tyr-1191 by mTORC2. Dephosphorylated by PTPRE at Tyr-1000, Tyr-1186, Tyr-1190 and Tyr-1191. Dephosphorylated by PTPRF and PTPN1. Dephosphorylated by PTPN2; down-regulates insulin-induced signaling. Post-translationally, S-nitrosylation at Cys-1084 by BLVRB inhibits the receptor tyrosine kinase, thereby inhibiting insulin signaling. In terms of processing, ubiquitinated by MARCHF1; leading to degradation thereby reducing surface INSR expression.

It localises to the cell membrane. Its subcellular location is the late endosome. It is found in the lysosome. It carries out the reaction L-tyrosyl-[protein] + ATP = O-phospho-L-tyrosyl-[protein] + ADP + H(+). With respect to regulation, activated in response to insulin. Autophosphorylation activates the kinase activity. PTPN1, PTPRE and PTPRF dephosphorylate important tyrosine residues, thereby reducing INSR activity. Inhibited by ENPP1. GRB10 and GRB14 inhibit the catalytic activity of the INSR, they block access of substrates to the activated receptor. SOCS1 and SOCS3 act as negative regulators of INSR activity, they bind to the activated INRS and interfere with the phosphorylation of INSR substrates. In terms of biological role, receptor tyrosine kinase which mediates the pleiotropic actions of insulin. Binding of insulin leads to phosphorylation of several intracellular substrates, including, insulin receptor substrates (IRS1, 2, 3, 4), SHC, GAB1, CBL and other signaling intermediates. Each of these phosphorylated proteins serve as docking proteins for other signaling proteins that contain Src-homology-2 domains (SH2 domain) that specifically recognize different phosphotyrosine residues, including the p85 regulatory subunit of PI3K and SHP2. Phosphorylation of IRSs proteins lead to the activation of two main signaling pathways: the PI3K-AKT/PKB pathway, which is responsible for most of the metabolic actions of insulin, and the Ras-MAPK pathway, which regulates expression of some genes and cooperates with the PI3K pathway to control cell growth and differentiation. Binding of the SH2 domains of PI3K to phosphotyrosines on IRS1 leads to the activation of PI3K and the generation of phosphatidylinositol-(3, 4, 5)-triphosphate (PIP3), a lipid second messenger, which activates several PIP3-dependent serine/threonine kinases, such as PDPK1 and subsequently AKT/PKB. The net effect of this pathway is to produce a translocation of the glucose transporter SLC2A4/GLUT4 from cytoplasmic vesicles to the cell membrane to facilitate glucose transport. Moreover, upon insulin stimulation, activated AKT/PKB is responsible for: anti-apoptotic effect of insulin by inducing phosphorylation of BAD; regulates the expression of gluconeogenic and lipogenic enzymes by controlling the activity of the winged helix or forkhead (FOX) class of transcription factors. Another pathway regulated by PI3K-AKT/PKB activation is mTORC1 signaling pathway which regulates cell growth and metabolism and integrates signals from insulin. AKT mediates insulin-stimulated protein synthesis by phosphorylating TSC2 thereby activating mTORC1 pathway. The Ras/RAF/MAP2K/MAPK pathway is mainly involved in mediating cell growth, survival and cellular differentiation of insulin. Phosphorylated IRS1 recruits GRB2/SOS complex, which triggers the activation of the Ras/RAF/MAP2K/MAPK pathway. In addition to binding insulin, the insulin receptor can bind insulin-like growth factors (IGFI and IGFII). When present in a hybrid receptor with IGF1R, binds IGF1. In adipocytes, inhibits lipolysis. This is Insulin receptor (Insr) from Rattus norvegicus (Rat).